Here is a 340-residue protein sequence, read N- to C-terminus: Phenylalanine--tRNA ligase alpha subunit (340 aa).

Glutamate 255 serves as a coordination point for Mg(2+).

This sequence belongs to the class-II aminoacyl-tRNA synthetase family. Phe-tRNA synthetase alpha subunit type 1 subfamily. In terms of assembly, tetramer of two alpha and two beta subunits. The cofactor is Mg(2+).

The protein localises to the cytoplasm. The catalysed reaction is tRNA(Phe) + L-phenylalanine + ATP = L-phenylalanyl-tRNA(Phe) + AMP + diphosphate + H(+). The sequence is that of Phenylalanine--tRNA ligase alpha subunit from Exiguobacterium sp. (strain ATCC BAA-1283 / AT1b).